Here is a 542-residue protein sequence, read N- to C-terminus: Chaperonin GroEL 2 (542 aa).

Residues 30 to 33 (TLGP), Lys-51, 87 to 91 (DGTTT), Gly-415, and Asp-496 each bind ATP.

It belongs to the chaperonin (HSP60) family. Forms a cylinder of 14 subunits composed of two heptameric rings stacked back-to-back. Interacts with the co-chaperonin GroES.

It localises to the cytoplasm. The enzyme catalyses ATP + H2O + a folded polypeptide = ADP + phosphate + an unfolded polypeptide.. Together with its co-chaperonin GroES, plays an essential role in assisting protein folding. The GroEL-GroES system forms a nano-cage that allows encapsulation of the non-native substrate proteins and provides a physical environment optimized to promote and accelerate protein folding. The protein is Chaperonin GroEL 2 of Mesorhizobium japonicum (strain LMG 29417 / CECT 9101 / MAFF 303099) (Mesorhizobium loti (strain MAFF 303099)).